The chain runs to 182 residues: MNYVPELKKYYKDSVIKELVKEFEYKSIMQVPKLEKIVISVGVGEAVRNKKLLDSAVLELAQITGQKAVKTKAKKAIAGFKIRQGQEIGAKVTLRGNAMYEFLYKLIHLALPRVKDFRGINGDAFDGNGNYSFGITEQIIFSEIDYDKIERISGLNITIVTTASNDKESKALLLKFGMPFSN.

Belongs to the universal ribosomal protein uL5 family. In terms of assembly, part of the 50S ribosomal subunit; part of the 5S rRNA/L5/L18/L25 subcomplex. Contacts the 5S rRNA and the P site tRNA. Forms a bridge to the 30S subunit in the 70S ribosome.

In terms of biological role, this is one of the proteins that bind and probably mediate the attachment of the 5S RNA into the large ribosomal subunit, where it forms part of the central protuberance. In the 70S ribosome it contacts protein S13 of the 30S subunit (bridge B1b), connecting the 2 subunits; this bridge is implicated in subunit movement. Contacts the P site tRNA; the 5S rRNA and some of its associated proteins might help stabilize positioning of ribosome-bound tRNAs. This chain is Large ribosomal subunit protein uL5, found in Borreliella burgdorferi (strain ATCC 35210 / DSM 4680 / CIP 102532 / B31) (Borrelia burgdorferi).